A 114-amino-acid polypeptide reads, in one-letter code: U17-barytoxin-Tl1a (114 aa).

The first 20 residues, 1 to 20 (MKTIIVFLSLLVLATKFGDA), serve as a signal peptide directing secretion. Positions 21-74 (NEGVNQEQMKEVIQNEFREDFLNEMAAMSLLQQLEAIESTLLEKEADRNSRQKR) are excised as a propeptide. 3 disulfides stabilise this stretch: Cys75–Cys88, Cys82–Cys93, and Cys87–Cys108.

This sequence belongs to the neurotoxin 14 (magi-1) family. 03 (ICK-30-40) subfamily. As to expression, expressed by the venom gland.

The protein resides in the secreted. In terms of biological role, ion channel inhibitor. In Trittame loki (Brush-footed trapdoor spider), this protein is U17-barytoxin-Tl1a.